A 453-amino-acid polypeptide reads, in one-letter code: uncharacterized protein (453 aa).

The presence of the two linear plasmids, termed pGKL1 and pGKL2, in strains of Kluyveromyces lactis confers the killer phenotype to the host cell, by promoting the secretion of a toxin able to inhibit the growth of sensitive strains. This is an uncharacterized protein from Kluyveromyces lactis (strain ATCC 8585 / CBS 2359 / DSM 70799 / NBRC 1267 / NRRL Y-1140 / WM37) (Yeast).